The sequence spans 130 residues: Anti-adapter protein IraD (130 aa).

Belongs to the GpW/Gp25 family. IraD subfamily. Interacts with RssB.

The protein localises to the cytoplasm. In terms of biological role, inhibits RpoS proteolysis by regulating RssB activity, thereby increasing the stability of the sigma stress factor RpoS during oxidative stress. Its effect on RpoS stability is due to its interaction with RssB, which probably blocks the interaction of RssB with RpoS, and the consequent delivery of the RssB-RpoS complex to the ClpXP protein degradation pathway. The protein is Anti-adapter protein IraD of Escherichia coli O157:H7.